We begin with the raw amino-acid sequence, 132 residues long: MAKVVRKKTVRRKKDRKNIERGQAHIQSTFNNSIVTLTDMQGNTIGWSCAGQLGFKGSRKSTPFAAQMCAEAAAKSAMEHGLKTIEVFVKGPGAGREAAIRALQAAGLEVSLIKDVTPIPHNGCRPPKRRRV.

The protein belongs to the universal ribosomal protein uS11 family. As to quaternary structure, part of the 30S ribosomal subunit. Interacts with proteins S7 and S18. Binds to IF-3.

Functionally, located on the platform of the 30S subunit, it bridges several disparate RNA helices of the 16S rRNA. Forms part of the Shine-Dalgarno cleft in the 70S ribosome. In Alkaliphilus metalliredigens (strain QYMF), this protein is Small ribosomal subunit protein uS11.